A 367-amino-acid chain; its full sequence is UDP-N-acetylglucosamine--N-acetylmuramyl-(pentapeptide) pyrophosphoryl-undecaprenol N-acetylglucosamine transferase (367 aa).

UDP-N-acetyl-alpha-D-glucosamine-binding positions include 15-17 (TGG), N127, R163, S191, I249, and Q294.

Belongs to the glycosyltransferase 28 family. MurG subfamily.

It localises to the cell inner membrane. The enzyme catalyses di-trans,octa-cis-undecaprenyl diphospho-N-acetyl-alpha-D-muramoyl-L-alanyl-D-glutamyl-meso-2,6-diaminopimeloyl-D-alanyl-D-alanine + UDP-N-acetyl-alpha-D-glucosamine = di-trans,octa-cis-undecaprenyl diphospho-[N-acetyl-alpha-D-glucosaminyl-(1-&gt;4)]-N-acetyl-alpha-D-muramoyl-L-alanyl-D-glutamyl-meso-2,6-diaminopimeloyl-D-alanyl-D-alanine + UDP + H(+). It functions in the pathway cell wall biogenesis; peptidoglycan biosynthesis. Functionally, cell wall formation. Catalyzes the transfer of a GlcNAc subunit on undecaprenyl-pyrophosphoryl-MurNAc-pentapeptide (lipid intermediate I) to form undecaprenyl-pyrophosphoryl-MurNAc-(pentapeptide)GlcNAc (lipid intermediate II). The sequence is that of UDP-N-acetylglucosamine--N-acetylmuramyl-(pentapeptide) pyrophosphoryl-undecaprenol N-acetylglucosamine transferase from Burkholderia cenocepacia (strain HI2424).